The chain runs to 1142 residues: MRLTGPWKLWLWMSIFLLPASTSVTVRDKTEESCPILRIEGHQLTYDNINKLEVSGFDLGDSFSLRRAFCESDKTCFKLGSALLIRDTIKIFPKGLPEEYSVAAMFRVRRNAKKERWFLWQVLNQQNIPQISIVVDGGKKVVEFMFQATEGDVLNYIFRNRELRPLFDRQWHKLGISIQSQVISLYMDCNLIARRQTDEKDTVDFHGRTVIATRASDGKPVDIELHQLKIYCSANLIAQETCCEISDTKCPEQDGFGNIASSWVTAHASKMSSYLPAKQELKDQCQCIPNKGEAGLPGAPGSPGQKGHKGEPGENGLHGAPGFPGQKGEQGFEGSKGETGEKGEQGEKGDPALAGLNGENGLKGDLGPHGPPGPKGEKGDTGPPGPPALPGSLGIQGPQGPPGKEGQRGRRGKTGPPGKPGPPGPPGPPGIQGIHQTLGGYYNKDNKGNDEHEAGGLKGDKGETGLPGFPGSVGPKGQKGEPGEPFTKGEKGDRGEPGVIGSQGVKGEPGDPGPPGLIGSPGLKGQQGSAGSMGPRGPPGDVGLPGEHGIPGKQGIKGEKGDPGGIIGPPGLPGPKGEAGPPGKSLPGEPGLDGNPGAPGPRGPKGERGLPGVHGSPGDIGPQGIGIPGRTGAQGPAGEPGIQGPRGLPGLPGTPGTPGNDGVPGRDGKPGLPGPPGDPIALPLLGDIGALLKNFCGNCQASVPGLKSNKGEEGGAGEPGKYDSMARKGDIGPRGPPGIPGREGPKGSKGERGYPGIPGEKGDEGLQGIPGIPGAPGPTGPPGLMGRTGHPGPTGAKGEKGSDGPPGKPGPPGPPGIPFNERNGMSSLYKIKGGVNVPSYPGPPGPPGPKGDPGPVGEPGAMGLPGLEGFPGVKGDRGPAGPPGIAGMSGKPGAPGPPGVPGEPGERGPVGDIGFPGPEGPSGKPGINGKDGIPGAQGIMGKPGDRGPKGERGDQGIPGDRGSQGERGKPGLTGMKGAIGPMGPPGNKGSMGSPGHQGPPGSPGIPGIPADAVSFEEIKKYINQEVLRIFEERMAVFLSQLKLPAAMLAAQAYGRPGPPGKDGLPGPPGDPGPQGYRGQKGERGEPGIGLPGSPGLPGTSALGLPGSPGAPGPQGPPGPSGRCNPEDCLYPVSHAHQRTGGN.

The signal sequence occupies residues 1 to 23; it reads MRLTGPWKLWLWMSIFLLPASTS. The region spanning 50–234 is the Laminin G-like domain; it reads NKLEVSGFDL…LHQLKIYCSA (185 aa). Disordered regions lie at residues 288-680, 704-1009, and 1053-1142; these read IPNK…GDPI, PGLK…PGIP, and YGRP…TGGN. Collagen-like domains lie at 292 to 349, 350 to 391, and 392 to 433; these read GEAG…GEKG, DPAL…ALPG, and SLGI…GIQG. The segment at 292-351 is triple-helical region 1 (COL1); sequence GEAGLPGAPGSPGQKGHKGEPGENGLHGAPGFPGQKGEQGFEGSKGETGEKGEQGEKGDP. Over residues 335-350 the composition is skewed to basic and acidic residues; the sequence is SKGETGEKGEQGEKGD. The interval 370-429 is triple-helical region 2 (COL2); the sequence is GPPGPKGEKGDTGPPGPPALPGSLGIQGPQGPPGKEGQRGRRGKTGPPGKPGPPGPPGPP. Low complexity predominate over residues 390–404; the sequence is PGSLGIQGPQGPPGK. The segment covering 417–429 has biased composition (pro residues); it reads PGKPGPPGPPGPP. Composition is skewed to basic and acidic residues over residues 444–463 and 478–496; these read KDNKGNDEHEAGGLKGDKGE and QKGEPGEPFTKGEKGDRGE. Positions 448 to 688 are triple-helical region 3 (COL3); sequence GNDEHEAGGL…PIALPLLGDI (241 aa). Collagen-like domains are found at residues 474–516, 568–624, 626–678, 728–778, 779–814, 845–903, 904–947, and 948–1004; these read GPKG…GPPG, GPPG…GPQG, GIPG…PPGD, KGDI…APGP, TGPPGLMGRTGHPGPTGAKGEKGSDGPPGKPGPPGP, GPPG…VPGE, PGER…GDRG, and PKGE…GSPG. Low complexity predominate over residues 640–651; sequence PGIQGPRGLPGL. The segment at 700 to 818 is triple-helical region 4 (COL4); that stretch reads QASVPGLKSN…PGPPGPPGIP (119 aa). Basic and acidic residues-rich tracts occupy residues 720–731 and 743–752; these read GKYDSMARKGDI and EGPKGSKGER. 2 stretches are compositionally biased toward pro residues: residues 806-817 and 840-852; these read PGKPGPPGPPGI and YPGPPGPPGPKGD. The triple-helical region 5 (COL5) stretch occupies residues 833–1012; the sequence is GGVNVPSYPG…PGIPGIPADA (180 aa). Over residues 943-954 the composition is skewed to basic and acidic residues; sequence PGDRGPKGERGD. The short motif at 952–954 is the Cell attachment site element; sequence RGD. The interval 1054-1111 is triple-helical region 6 (COL6); the sequence is GRPGPPGKDGLPGPPGDPGPQGYRGQKGERGEPGIGLPGSPGLPGTSALGLPGSPGAP. The segment covering 1093–1107 has biased composition (low complexity); sequence SPGLPGTSALGLPGS. Positions 1108–1119 are enriched in pro residues; it reads PGAPGPQGPPGP.

This sequence belongs to the fibril-associated collagens with interrupted helices (FACIT) family. As to quaternary structure, oligomer; disulfide-linked. Post-translationally, prolines at the third position of the tripeptide repeating unit (G-X-Y) are hydroxylated in some or all of the chains. As to expression, localized to vascular, neuronal, mesenchymal, and some epithelial basement membrane zones in umbilical cord.

It is found in the secreted. The protein localises to the extracellular space. It localises to the extracellular matrix. Its function is as follows. May act as a cross-bridge between fibrils and other extracellular matrix molecules. Involved in skeletal myogenesis in the developing esophagus. May play a role in organization of the pericellular matrix or the sphinteric smooth muscle. In Homo sapiens (Human), this protein is Collagen alpha-1(XIX) chain (COL19A1).